The following is a 303-amino-acid chain: Ribosomal RNA small subunit methyltransferase H (303 aa).

Residues 33 to 35 (GGH), Asp-52, Phe-78, Asp-99, and Gln-106 contribute to the S-adenosyl-L-methionine site.

The protein belongs to the methyltransferase superfamily. RsmH family.

Its subcellular location is the cytoplasm. It catalyses the reaction cytidine(1402) in 16S rRNA + S-adenosyl-L-methionine = N(4)-methylcytidine(1402) in 16S rRNA + S-adenosyl-L-homocysteine + H(+). Functionally, specifically methylates the N4 position of cytidine in position 1402 (C1402) of 16S rRNA. The sequence is that of Ribosomal RNA small subunit methyltransferase H from Phytoplasma australiense.